The following is a 275-amino-acid chain: Bis(5'-nucleosyl)-tetraphosphatase, symmetrical (275 aa).

This sequence belongs to the Ap4A hydrolase family.

It catalyses the reaction P(1),P(4)-bis(5'-adenosyl) tetraphosphate + H2O = 2 ADP + 2 H(+). Hydrolyzes diadenosine 5',5'''-P1,P4-tetraphosphate to yield ADP. The chain is Bis(5'-nucleosyl)-tetraphosphatase, symmetrical from Photorhabdus laumondii subsp. laumondii (strain DSM 15139 / CIP 105565 / TT01) (Photorhabdus luminescens subsp. laumondii).